The chain runs to 137 residues: Putative mucosal pentraxin homolog (137 aa).

The 137-residue stretch at 1-137 (MGMYLLHIGN…YVVTKPKVWA (137 aa)) folds into the Pentraxin (PTX) domain. Positions 73, 75, and 85 each coordinate Ca(2+).

This sequence belongs to the pentraxin family. In terms of tissue distribution, not expressed in the intestinal tract including ascending colon, descending colon and rectum. Not expressed in the human colon cancer cell lines HT-29 and CaCo-2.

This is Putative mucosal pentraxin homolog (MPTX1) from Homo sapiens (Human).